The following is a 277-amino-acid chain: NAD kinase (277 aa).

The active-site Proton acceptor is Asp-67. NAD(+)-binding positions include Asp-67–Gly-68, Arg-72, Asn-137–Glu-138, Lys-148, Arg-165, Asp-167, Thr-178–Ser-183, Leu-202, and Gln-236.

The protein belongs to the NAD kinase family. Requires a divalent metal cation as cofactor.

The protein localises to the cytoplasm. It catalyses the reaction NAD(+) + ATP = ADP + NADP(+) + H(+). Its function is as follows. Involved in the regulation of the intracellular balance of NAD and NADP, and is a key enzyme in the biosynthesis of NADP. Catalyzes specifically the phosphorylation on 2'-hydroxyl of the adenosine moiety of NAD to yield NADP. This chain is NAD kinase, found in Pyrococcus abyssi (strain GE5 / Orsay).